The following is a 224-amino-acid chain: uncharacterized protein (224 aa).

It is found in the virion. This is an uncharacterized protein from Acanthamoeba polyphaga mimivirus (APMV).